Consider the following 164-residue polypeptide: MTCQTYNLFVLSVIMIYYGHTASSLNLVQLQDDIDKLKADFNSSHSDVADGGPIIVEKLKNWTERNEKRIILSQIVSMYLEMLENTDKSKPHIKHISEELYTLKNNLPDGVKKVKDIMDLAKLPMNDLRIQRKAANELFSILQKLVDPPSFKRKRSQSQRRCNC.

The N-terminal stretch at 1 to 19 (MTCQTYNLFVLSVIMIYYG) is a signal peptide. 2 N-linked (GlcNAc...) asparagine glycosylation sites follow: N42 and N61.

Belongs to the type II (or gamma) interferon family. Homodimer.

Its subcellular location is the secreted. Produced by lymphocytes activated by specific antigens or mitogens. IFN-gamma, in addition to having antiviral activity, has important immunoregulatory functions. It is a potent activator of macrophages, it has antiproliferative effects on transformed cells and it can potentiate the antiviral and antitumor effects of the type I interferons. The polypeptide is Interferon gamma (IFNG) (Gallus gallus (Chicken)).